Consider the following 375-residue polypeptide: Growth/differentiation factor 8 (375 aa).

Positions 1–23 are cleaved as a signal peptide; that stretch reads MQKLAVYVYIYLFMQILVHPVAL. Positions 24 to 266 are excised as a propeptide; that stretch reads DGSSQPTENA…VTDTPKRSRR (243 aa). A glycan (N-linked (GlcNAc...) asparagine) is linked at N71. 4 disulfide bridges follow: C272/C282, C281/C340, C309/C372, and C313/C374.

This sequence belongs to the TGF-beta family. Homodimer; disulfide-linked.

It is found in the secreted. Acts specifically as a negative regulator of skeletal muscle growth. The sequence is that of Growth/differentiation factor 8 (MSTN) from Meleagris gallopavo (Wild turkey).